The following is a 362-amino-acid chain: Beta-ketoacyl-[acyl-carrier-protein] synthase III 2 (362 aa).

Catalysis depends on residues Cys-113 and His-251. The ACP-binding stretch occupies residues 252-256 (QANIR). The active site involves Asn-281.

The protein belongs to the thiolase-like superfamily. FabH family. In terms of assembly, homodimer.

The protein localises to the cytoplasm. The enzyme catalyses malonyl-[ACP] + acetyl-CoA + H(+) = 3-oxobutanoyl-[ACP] + CO2 + CoA. It functions in the pathway lipid metabolism; fatty acid biosynthesis. In terms of biological role, catalyzes the condensation reaction of fatty acid synthesis by the addition to an acyl acceptor of two carbons from malonyl-ACP. Catalyzes the first condensation reaction which initiates fatty acid synthesis and may therefore play a role in governing the total rate of fatty acid production. Possesses both acetoacetyl-ACP synthase and acetyl transacylase activities. Its substrate specificity determines the biosynthesis of branched-chain and/or straight-chain of fatty acids. This chain is Beta-ketoacyl-[acyl-carrier-protein] synthase III 2, found in Vibrio vulnificus (strain CMCP6).